We begin with the raw amino-acid sequence, 1377 residues long: DNA-directed RNA polymerase subunit beta' (1377 aa).

Zn(2+)-binding residues include Cys-60, Cys-62, Cys-75, and Cys-78. 3 residues coordinate Mg(2+): Asp-449, Asp-451, and Asp-453. The Zn(2+) site is built by Cys-777, Cys-851, Cys-858, and Cys-861.

This sequence belongs to the RNA polymerase beta' chain family. As to quaternary structure, the RNAP catalytic core consists of 2 alpha, 1 beta, 1 beta' and 1 omega subunit. When a sigma factor is associated with the core the holoenzyme is formed, which can initiate transcription. The cofactor is Mg(2+). It depends on Zn(2+) as a cofactor.

It carries out the reaction RNA(n) + a ribonucleoside 5'-triphosphate = RNA(n+1) + diphosphate. Its function is as follows. DNA-dependent RNA polymerase catalyzes the transcription of DNA into RNA using the four ribonucleoside triphosphates as substrates. This Borreliella burgdorferi (strain ATCC 35210 / DSM 4680 / CIP 102532 / B31) (Borrelia burgdorferi) protein is DNA-directed RNA polymerase subunit beta'.